The chain runs to 135 residues: Galectin-1 (135 aa).

An N-acetylalanine modification is found at Ala-2. In terms of domain architecture, Galectin spans 4 to 135; the sequence is GLVASNLNLK…DFKIKCVAFE (132 aa). Lys-13, Lys-19, and Lys-29 each carry N6-acetyllysine. A Phosphoserine modification is found at Ser-30. A beta-D-galactoside is bound by residues 45–49, His-53, Asn-62, and 69–72; these read HFNPR and WGAE. Lys-128 is modified (N6-acetyllysine).

In terms of assembly, homodimer. Binds LGALS3BP. Interacts with CD2, CD3, CD4, CD6, CD7, CD43, ALCAM and CD45. Interacts with laminin (via poly-N-acetyllactosamine). Interacts with SUSD2. Interacts with cargo receptor TMED10; the interaction mediates the translocation from the cytoplasm into the ERGIC (endoplasmic reticulum-Golgi intermediate compartment) and thereby secretion.

The protein resides in the secreted. It localises to the extracellular space. Its subcellular location is the extracellular matrix. The protein localises to the cytoplasm. In terms of biological role, lectin that binds beta-galactoside and a wide array of complex carbohydrates. Plays a role in regulating apoptosis, cell proliferation and cell differentiation. Inhibits CD45 protein phosphatase activity and therefore the dephosphorylation of Lyn kinase. Strong inducer of T-cell apoptosis. The protein is Galectin-1 (LGALS1) of Sus scrofa (Pig).